The primary structure comprises 471 residues: Glutamyl-tRNA(Gln) amidotransferase subunit A (471 aa).

Active-site charge relay system residues include Lys66 and Ser141. Catalysis depends on Ser165, which acts as the Acyl-ester intermediate.

This sequence belongs to the amidase family. GatA subfamily. As to quaternary structure, heterotrimer of A, B and C subunits.

The catalysed reaction is L-glutamyl-tRNA(Gln) + L-glutamine + ATP + H2O = L-glutaminyl-tRNA(Gln) + L-glutamate + ADP + phosphate + H(+). Functionally, allows the formation of correctly charged Gln-tRNA(Gln) through the transamidation of misacylated Glu-tRNA(Gln) in organisms which lack glutaminyl-tRNA synthetase. The reaction takes place in the presence of glutamine and ATP through an activated gamma-phospho-Glu-tRNA(Gln). The polypeptide is Glutamyl-tRNA(Gln) amidotransferase subunit A (Thermus thermophilus (strain ATCC BAA-163 / DSM 7039 / HB27)).